Consider the following 197-residue polypeptide: Recombination protein RecR (197 aa).

The segment at 55 to 70 (CVQCRDFTESEICTIC) adopts a C4-type zinc-finger fold. One can recognise a Toprim domain in the interval 78–173 (QQLCVVESPA…RPSRLAQGMP (96 aa)).

The protein belongs to the RecR family.

May play a role in DNA repair. It seems to be involved in an RecBC-independent recombinational process of DNA repair. It may act with RecF and RecO. The protein is Recombination protein RecR of Xanthomonas axonopodis pv. citri (strain 306).